The primary structure comprises 297 residues: N-acetylmuramic acid 6-phosphate etherase (297 aa).

The region spanning 56 to 219 (AIEAFNKGGR…STISMIGIGK (164 aa)) is the SIS domain. E84 acts as the Proton donor in catalysis. Residue E115 is part of the active site.

The protein belongs to the GCKR-like family. MurNAc-6-P etherase subfamily. In terms of assembly, homodimer.

The catalysed reaction is N-acetyl-D-muramate 6-phosphate + H2O = N-acetyl-D-glucosamine 6-phosphate + (R)-lactate. The protein operates within amino-sugar metabolism; N-acetylmuramate degradation. Specifically catalyzes the cleavage of the D-lactyl ether substituent of MurNAc 6-phosphate, producing GlcNAc 6-phosphate and D-lactate. This is N-acetylmuramic acid 6-phosphate etherase from Lactococcus lactis subsp. lactis (strain IL1403) (Streptococcus lactis).